The primary structure comprises 99 residues: Pterin-4-alpha-carbinolamine dehydratase (99 aa).

It belongs to the pterin-4-alpha-carbinolamine dehydratase family.

It carries out the reaction (4aS,6R)-4a-hydroxy-L-erythro-5,6,7,8-tetrahydrobiopterin = (6R)-L-erythro-6,7-dihydrobiopterin + H2O. Its function is as follows. Involved in tetrahydrobiopterin biosynthesis. This Dictyostelium discoideum (Social amoeba) protein is Pterin-4-alpha-carbinolamine dehydratase (pcbd).